Reading from the N-terminus, the 354-residue chain is Uroporphyrinogen decarboxylase (354 aa).

Substrate-binding positions include 27-31, D77, Y154, T209, and H327; that span reads RQAGR.

It belongs to the uroporphyrinogen decarboxylase family. As to quaternary structure, homodimer.

The protein resides in the cytoplasm. The enzyme catalyses uroporphyrinogen III + 4 H(+) = coproporphyrinogen III + 4 CO2. Its pathway is porphyrin-containing compound metabolism; protoporphyrin-IX biosynthesis; coproporphyrinogen-III from 5-aminolevulinate: step 4/4. Functionally, catalyzes the decarboxylation of four acetate groups of uroporphyrinogen-III to yield coproporphyrinogen-III. The protein is Uroporphyrinogen decarboxylase of Escherichia coli O81 (strain ED1a).